We begin with the raw amino-acid sequence, 211 residues long: Outer-membrane lipoprotein carrier protein (211 aa).

A signal peptide spans 1–24; that stretch reads MRNRILVSACAALAMFAMQAPAHA.

Belongs to the LolA family. In terms of assembly, monomer.

The protein resides in the periplasm. In terms of biological role, participates in the translocation of lipoproteins from the inner membrane to the outer membrane. Only forms a complex with a lipoprotein if the residue after the N-terminal Cys is not an aspartate (The Asp acts as a targeting signal to indicate that the lipoprotein should stay in the inner membrane). This chain is Outer-membrane lipoprotein carrier protein, found in Cupriavidus taiwanensis (strain DSM 17343 / BCRC 17206 / CCUG 44338 / CIP 107171 / LMG 19424 / R1) (Ralstonia taiwanensis (strain LMG 19424)).